We begin with the raw amino-acid sequence, 211 residues long: Protein-lysine N-methyltransferase DDB_G0272708 (211 aa).

It belongs to the class I-like SAM-binding methyltransferase superfamily. EFM5 family.

Its subcellular location is the cytoplasm. Functionally, S-adenosyl-L-methionine-dependent protein-lysine N-methyltransferase that methylates elongation factor 1-alpha. This chain is Protein-lysine N-methyltransferase DDB_G0272708, found in Dictyostelium discoideum (Social amoeba).